We begin with the raw amino-acid sequence, 415 residues long: Serine hydroxymethyltransferase (415 aa).

(6S)-5,6,7,8-tetrahydrofolate is bound by residues L117 and 121–123 (GHL). K226 carries the N6-(pyridoxal phosphate)lysine modification. Residues E241 and 349–351 (SPF) contribute to the (6S)-5,6,7,8-tetrahydrofolate site.

It belongs to the SHMT family. As to quaternary structure, homodimer. The cofactor is pyridoxal 5'-phosphate.

The protein localises to the cytoplasm. The catalysed reaction is (6R)-5,10-methylene-5,6,7,8-tetrahydrofolate + glycine + H2O = (6S)-5,6,7,8-tetrahydrofolate + L-serine. The protein operates within one-carbon metabolism; tetrahydrofolate interconversion. It functions in the pathway amino-acid biosynthesis; glycine biosynthesis; glycine from L-serine: step 1/1. Its function is as follows. Catalyzes the reversible interconversion of serine and glycine with tetrahydrofolate (THF) serving as the one-carbon carrier. This reaction serves as the major source of one-carbon groups required for the biosynthesis of purines, thymidylate, methionine, and other important biomolecules. Also exhibits THF-independent aldolase activity toward beta-hydroxyamino acids, producing glycine and aldehydes, via a retro-aldol mechanism. The polypeptide is Serine hydroxymethyltransferase (Geobacter metallireducens (strain ATCC 53774 / DSM 7210 / GS-15)).